The sequence spans 151 residues: Neuroglobin (151 aa).

Residues Met1–Asn149 form the Globin domain. Heme b contacts are provided by His64 and His96.

The protein belongs to the globin family. As to quaternary structure, monomer. Homodimer and homotetramer; disulfide-linked. Mainly monomeric but also detected as part of homodimers and homotetramers. Interacts with 14-3-3 proteins; regulates the phosphorylation of NGB. Could interact (ferrous form) with G-alpha(i) proteins (GTP-bound form). Post-translationally, phosphorylated during hypoxia by ERK1/ERK2. Phosphorylation regulates the heme pocket hexacoordination preventing the association of His-64 with the heme metal center. Thereby, promotes the access of dioxygen and nitrite to the heme and stimulates the nitrite reductase activity. Phosphorylation during hypoxia is stabilized by 14-3-3 proteins.

The protein resides in the cytoplasm. It localises to the cytosol. Its subcellular location is the mitochondrion matrix. It catalyses the reaction Fe(III)-heme b-[protein] + nitric oxide + H2O = Fe(II)-heme b-[protein] + nitrite + 2 H(+). Its function is as follows. Monomeric globin with a bis-histidyl six-coordinate heme-iron atom through which it can bind dioxygen, carbon monoxide and nitric oxide. Could help transport oxygen and increase its availability to the metabolically active neuronal tissues, though its low quantity in tissues as well as its high affinity for dioxygen, which may limit its oxygen-releasing ability, argue against it. The ferrous/deoxygenated form exhibits a nitrite reductase activity and it could produce nitric oxide which in turn inhibits cellular respiration in response to hypoxia. In its ferrous/deoxygenated state, it may also exhibit GDI (Guanine nucleotide Dissociation Inhibitor) activity toward heterotrimeric G-alpha proteins, thereby regulating signal transduction to facilitate neuroprotective responses in the wake of hypoxia and associated oxidative stress. The protein is Neuroglobin of Sus scrofa (Pig).